The following is a 196-amino-acid chain: Large ribosomal subunit protein uL5 (196 aa).

The protein belongs to the universal ribosomal protein uL5 family. Part of the 50S ribosomal subunit; part of the 5S rRNA/L5/L18/L25 subcomplex. Contacts the 5S rRNA and the P site tRNA. Forms a bridge to the 30S subunit in the 70S ribosome.

Its function is as follows. This is one of the proteins that bind and probably mediate the attachment of the 5S RNA into the large ribosomal subunit, where it forms part of the central protuberance. In the 70S ribosome it contacts protein S13 of the 30S subunit (bridge B1b), connecting the 2 subunits; this bridge is implicated in subunit movement. Contacts the P site tRNA; the 5S rRNA and some of its associated proteins might help stabilize positioning of ribosome-bound tRNAs. This chain is Large ribosomal subunit protein uL5, found in Chlorobium phaeobacteroides (strain BS1).